The following is a 542-amino-acid chain: CTP synthase (542 aa).

The interval 1–265 (MARYVFITGG…DSEVLSAFGI (265 aa)) is amidoligase domain. S13 lines the CTP pocket. Position 13 (S13) interacts with UTP. 14 to 19 (SLGKGI) contributes to the ATP binding site. Y54 contacts L-glutamine. Residue D71 participates in ATP binding. Mg(2+) is bound by residues D71 and E139. CTP is bound by residues 146–148 (DIE), 186–191 (KTKPTQ), and K222. UTP-binding positions include 186 to 191 (KTKPTQ) and K222. Residues 291–541 (TIAVVGKYTG…IEAAIEQSRL (251 aa)) form the Glutamine amidotransferase type-1 domain. G353 serves as a coordination point for L-glutamine. C380 functions as the Nucleophile; for glutamine hydrolysis in the catalytic mechanism. L-glutamine is bound by residues 381 to 384 (FGMQ), E404, and R469. Active-site residues include H514 and E516.

It belongs to the CTP synthase family. Homotetramer.

The catalysed reaction is UTP + L-glutamine + ATP + H2O = CTP + L-glutamate + ADP + phosphate + 2 H(+). It carries out the reaction L-glutamine + H2O = L-glutamate + NH4(+). It catalyses the reaction UTP + NH4(+) + ATP = CTP + ADP + phosphate + 2 H(+). It participates in pyrimidine metabolism; CTP biosynthesis via de novo pathway; CTP from UDP: step 2/2. With respect to regulation, allosterically activated by GTP, when glutamine is the substrate; GTP has no effect on the reaction when ammonia is the substrate. The allosteric effector GTP functions by stabilizing the protein conformation that binds the tetrahedral intermediate(s) formed during glutamine hydrolysis. Inhibited by the product CTP, via allosteric rather than competitive inhibition. Its function is as follows. Catalyzes the ATP-dependent amination of UTP to CTP with either L-glutamine or ammonia as the source of nitrogen. Regulates intracellular CTP levels through interactions with the four ribonucleotide triphosphates. The sequence is that of CTP synthase from Brucella melitensis biotype 2 (strain ATCC 23457).